The sequence spans 123 residues: UPF0102 protein PputW619_0932 (123 aa).

It belongs to the UPF0102 family.

The polypeptide is UPF0102 protein PputW619_0932 (Pseudomonas putida (strain W619)).